Here is a 632-residue protein sequence, read N- to C-terminus: 1-deoxy-D-xylulose-5-phosphate synthase (632 aa).

Residues H79 and 120 to 122 (GHA) each bind thiamine diphosphate. Mg(2+) is bound at residue D152. Thiamine diphosphate-binding positions include 153-154 (GS), N181, F293, and E377. N181 lines the Mg(2+) pocket.

It belongs to the transketolase family. DXPS subfamily. As to quaternary structure, homodimer. Mg(2+) is required as a cofactor. The cofactor is thiamine diphosphate.

The enzyme catalyses D-glyceraldehyde 3-phosphate + pyruvate + H(+) = 1-deoxy-D-xylulose 5-phosphate + CO2. The protein operates within metabolic intermediate biosynthesis; 1-deoxy-D-xylulose 5-phosphate biosynthesis; 1-deoxy-D-xylulose 5-phosphate from D-glyceraldehyde 3-phosphate and pyruvate: step 1/1. Its function is as follows. Catalyzes the acyloin condensation reaction between C atoms 2 and 3 of pyruvate and glyceraldehyde 3-phosphate to yield 1-deoxy-D-xylulose-5-phosphate (DXP). The chain is 1-deoxy-D-xylulose-5-phosphate synthase from Phocaeicola vulgatus (strain ATCC 8482 / DSM 1447 / JCM 5826 / CCUG 4940 / NBRC 14291 / NCTC 11154) (Bacteroides vulgatus).